Here is a 221-residue protein sequence, read N- to C-terminus: Flagellar L-ring protein 1 (221 aa).

The first 16 residues, 1 to 16, serve as a signal peptide directing secretion; sequence MKRFLILTPMVLALCG. A lipid anchor (N-palmitoyl cysteine) is attached at Cys-17. Cys-17 carries S-diacylglycerol cysteine lipidation.

This sequence belongs to the FlgH family. As to quaternary structure, the basal body constitutes a major portion of the flagellar organelle and consists of four rings (L,P,S, and M) mounted on a central rod.

The protein localises to the cell outer membrane. It is found in the bacterial flagellum basal body. Its function is as follows. Assembles around the rod to form the L-ring and probably protects the motor/basal body from shearing forces during rotation. This is Flagellar L-ring protein 1 from Yersinia pestis.